Here is a 64-residue protein sequence, read N- to C-terminus: Large ribosomal subunit protein bL35 (64 aa).

Basic residues predominate over residues Met1 to Arg44. The interval Met1 to Gln48 is disordered.

The protein belongs to the bacterial ribosomal protein bL35 family.

The protein is Large ribosomal subunit protein bL35 of Marinomonas sp. (strain MWYL1).